The chain runs to 79 residues: Acyl carrier protein 2 (79 aa).

Residues 2–77 (DDIETRVRKL…QAIDYLEEAV (76 aa)) form the Carrier domain. Ser37 carries the O-(pantetheine 4'-phosphoryl)serine modification.

The protein belongs to the acyl carrier protein (ACP) family. 4'-phosphopantetheine is transferred from CoA to a specific serine of apo-ACP by AcpS. This modification is essential for activity because fatty acids are bound in thioester linkage to the sulfhydryl of the prosthetic group.

The protein localises to the cytoplasm. It functions in the pathway lipid metabolism; fatty acid biosynthesis. Functionally, carrier of the growing fatty acid chain in fatty acid biosynthesis. The protein is Acyl carrier protein 2 of Pseudomonas aeruginosa (strain ATCC 15692 / DSM 22644 / CIP 104116 / JCM 14847 / LMG 12228 / 1C / PRS 101 / PAO1).